A 319-amino-acid polypeptide reads, in one-letter code: Taste receptor type 2 member 30 (319 aa).

A topological domain (extracellular) is located at residue Met1. Residues 2–22 form a helical membrane-spanning segment; it reads ITFLPIIFSILIVVIFVIGNF. Residues 23 to 46 lie on the Cytoplasmic side of the membrane; that stretch reads ANGFIALVNSIEWVKRQKISFVDQ. A helical transmembrane segment spans residues 47 to 67; the sequence is ILTALAVSRVGLLWVLLLHWY. The Extracellular portion of the chain corresponds to 68–86; the sequence is ATQLNPAFYSVEVRITAYN. Residues 87–107 traverse the membrane as a helical segment; that stretch reads VWAVTNHFSSWLATSLSMFYL. The Cytoplasmic portion of the chain corresponds to 108–126; sequence LRIANFSNLIFLRIKRRVK. The chain crosses the membrane as a helical span at residues 127–147; it reads SVVLVILLGPLLFLVCHLFVI. Residues 148-178 lie on the Extracellular side of the membrane; it reads NMDETVWTKEYEGNVTWKIKLRSAMYHSNMT. Residues Asn161 and Asn176 are each glycosylated (N-linked (GlcNAc...) asparagine). The helical transmembrane segment at 179–199 threads the bilayer; that stretch reads LTMLANFVPLTLTLISFLLLI. Over 200–229 the chain is Cytoplasmic; that stretch reads CSLCKHLKKMQLHGKGSQDPSTKVHIKALQ. The helical transmembrane segment at 230-250 threads the bilayer; it reads TVTSFLLLCAIYFLSMIISVC. The Extracellular segment spans residues 251–259; sequence NFGRLEKQP. A helical membrane pass occupies residues 260–280; the sequence is VFMFCQAIIFSYPSTHPFILI. The Cytoplasmic portion of the chain corresponds to 281-319; that stretch reads LGNKKLKQIFLSVLRHVRYWVKDRSLRLHRFTRGALCVF.

It belongs to the G-protein coupled receptor T2R family. Expressed in subsets of taste receptor cells of the tongue and exclusively in gustducin-positive cells.

Its subcellular location is the membrane. Receptor that may play a role in the perception of bitterness and is gustducin-linked. May play a role in sensing the chemical composition of the gastrointestinal content. The activity of this receptor may stimulate alpha gustducin, mediate PLC-beta-2 activation and lead to the gating of TRPM5. This Homo sapiens (Human) protein is Taste receptor type 2 member 30 (TAS2R30).